Consider the following 204-residue polypeptide: Holliday junction branch migration complex subunit RuvA (204 aa).

The interval 1-64 (MFAFLRGELV…EDLQQLFGFL (64 aa)) is domain I. Positions 65-143 (DEEELQLFRL…KIQPTSSAKA (79 aa)) are domain II. Positions 144-151 (GAPSAVLS) are flexible linker. Residues 151–204 (SATQLIDDAVAALTTLGFPKASAQKAVSKVLETTPGLSVEELVRTSLAAMHNNL) form a domain III region.

It belongs to the RuvA family. In terms of assembly, homotetramer. Forms an RuvA(8)-RuvB(12)-Holliday junction (HJ) complex. HJ DNA is sandwiched between 2 RuvA tetramers; dsDNA enters through RuvA and exits via RuvB. An RuvB hexamer assembles on each DNA strand where it exits the tetramer. Each RuvB hexamer is contacted by two RuvA subunits (via domain III) on 2 adjacent RuvB subunits; this complex drives branch migration. In the full resolvosome a probable DNA-RuvA(4)-RuvB(12)-RuvC(2) complex forms which resolves the HJ.

It localises to the cytoplasm. Its function is as follows. The RuvA-RuvB-RuvC complex processes Holliday junction (HJ) DNA during genetic recombination and DNA repair, while the RuvA-RuvB complex plays an important role in the rescue of blocked DNA replication forks via replication fork reversal (RFR). RuvA specifically binds to HJ cruciform DNA, conferring on it an open structure. The RuvB hexamer acts as an ATP-dependent pump, pulling dsDNA into and through the RuvAB complex. HJ branch migration allows RuvC to scan DNA until it finds its consensus sequence, where it cleaves and resolves the cruciform DNA. In Chlorobaculum parvum (strain DSM 263 / NCIMB 8327) (Chlorobium vibrioforme subsp. thiosulfatophilum), this protein is Holliday junction branch migration complex subunit RuvA.